The sequence spans 596 residues: MSGLTSVREAEDLWQKIQLRRCKREQERLKHPDVELRDGDFRLRGLVAGERVLEWEFIENETGTCTLQLSLSHYLAKWVMDHRGRAKRNVIINIEKQGARWTGMMDHYRVIKTDAGDAYIEIVFLHDFEQTKHIRVWCNPFLRPELQFPKVWIIFGPAKWCLLVTLFVNLLRLETSLWTLPDDPTDINEWMGPSFNPANWRNIVKPFPFLADNSPVTMVFSRFGTFYDTAKKILEDHQLTLTCRRYIKDRDPHPFEDLKGLWGIDPVEDLLQKIPLRDGCVVWDIEDNSGWGTQTAFGGSWLTGFVRGMVQLAGDGQVEGVDVFTGDYTFPGEYYSPWFMGTSPIAPHVVFEEGPLTGIKSSEFSYYEATDTSFLAGGQSAPGINEGISALVNIGGDLLTSFINSQLAALGAVGGAIDLPPLGGLLDAVLQPLYSDVFGAFMEVPTLRAMGISLPISGLEDIVTGLGDFHYFENMADGAMKAFTLSAFAAIASQIHKTRARTTHTLKVSDAAPYIFAPKPYGHCWIGDRVGTSVLGYPVEHQLFVERIRKVKYRIDKDGMKPLEIEIGYREPKNPALHILEEIKRVNGALGTAGIL.

The sequence is that of Minor tail protein Gp28 (28) from Mycobacterium phage L5 (Mycobacteriophage L5).